We begin with the raw amino-acid sequence, 154 residues long: Protein E6 (154 aa).

2 zinc fingers span residues 30-66 (CVFC…CPRC) and 103-139 (CCKC…CLHC).

This sequence belongs to the papillomaviridae E6 protein family. As to quaternary structure, forms homodimers. Interacts with ubiquitin-protein ligase UBE3A/E6-AP; this interaction stimulates UBE3A ubiquitin activity. Interacts with host TP53 and EP300; this interaction inhibits TP53 activity.

It is found in the host cytoplasm. It localises to the host nucleus. Functionally, plays a major role in the induction and maintenance of cellular transformation. E6 associates with host UBE3A/E6-AP ubiquitin-protein ligase and modulates its activity. Sequesters tumor suppressor TP53 in the host cytoplasm and modulates its activity by interacting with host EP300 that results in the reduction of TP53 acetylation and activation. In turn, apoptosis induced by DNA damage is inhibited. E6 also protects host keratinocytes from apoptosis by mediating the degradation of host BAK1. May also inhibit host immune response. In Homo sapiens (Human), this protein is Protein E6.